Reading from the N-terminus, the 370-residue chain is Peptidyl-prolyl cis-trans isomerase D (370 aa).

The PPIase cyclophilin-type domain maps to 11–176 (FFDISADGKP…EDWIISDCGE (166 aa)). TPR repeat units lie at residues 218–251 (VTTL…LNDY), 269–302 (LSCY…EAID), and 307–340 (TKAL…SPED).

This sequence belongs to the cyclophilin-type PPIase family. PPIase D subfamily.

The protein localises to the cytoplasm. The enzyme catalyses [protein]-peptidylproline (omega=180) = [protein]-peptidylproline (omega=0). In terms of biological role, PPIases accelerate the folding of proteins. It catalyzes the cis-trans isomerization of proline imidic peptide bonds in oligopeptides. This Debaryomyces hansenii (strain ATCC 36239 / CBS 767 / BCRC 21394 / JCM 1990 / NBRC 0083 / IGC 2968) (Yeast) protein is Peptidyl-prolyl cis-trans isomerase D (CPR6).